The following is a 56-amino-acid chain: Prokaryotic ubiquitin-like protein UBact (56 aa).

Positions 1-56 are disordered; that stretch reads MPDQAQKTRPVGPGPSGGGEGPGSPKVEKPNTEELLKRMRKVDPDQAKRYRQRTGQ. Positions 26 to 48 are enriched in basic and acidic residues; sequence KVEKPNTEELLKRMRKVDPDQAK. A Deamidated glutamine modification is found at glutamine 56. An Isoglutamyl lysine isopeptide (Gln-Lys) (interchain with K-? in acceptor proteins) cross-link involves residue glutamine 56.

This sequence belongs to the ubiquitin-like protein UBact family. In terms of processing, may be modified by deamidation of its C-terminal glutamine to glutamate by the adjacently encoded deamidase. This could be a prerequisite to the subsequent conjugation, as shown in the other prokaryotic ubiquitin-like protein Pup.

Its function is as follows. May function as a protein modifier covalently attached to lysine residues of substrate proteins. This may serve to target the modified proteins for degradation by proteasomes. This Pedosphaera parvula (strain Ellin514) protein is Prokaryotic ubiquitin-like protein UBact.